A 256-amino-acid polypeptide reads, in one-letter code: Nuclear shuttle protein (256 aa).

Positions N21–T42 match the Bipartite nuclear localization signal motif. The Nuclear localization signal signature appears at D81–L96. An interaction with Arabidopsis thaliana NSI protein region spans residues E150–D187.

The protein belongs to the begomovirus nuclear shuttle protein family. Binds to single-stranded and double-stranded viral DNA. Interacts with the host nuclear shuttle interacting (NSI) protein. This interaction may allow NSP to recruit NSI monomers to the viral genome and thus regulate nuclear export of viral genome by NSP.

Its subcellular location is the host nucleus. It is found in the host cytoplasm. The protein resides in the host cell membrane. In terms of biological role, binds to the genomic viral ssDNA, shuttles it into and out of the cell nucleus. Begomoviruses use 2 proteins to transport their DNA from cell to cell. The nuclear shuttle protein (NSP) shuttles it between nucleus and cytoplasm and the movement protein (MP) probably transports the DNA-NSP complex to the cell periphery and facilitates movement across the cell wall. The chain is Nuclear shuttle protein from Potato yellow mosaic virus (isolate Venezuela) (PYMV).